Reading from the N-terminus, the 59-residue chain is Large ribosomal subunit protein uL30 (59 aa).

This sequence belongs to the universal ribosomal protein uL30 family. In terms of assembly, part of the 50S ribosomal subunit.

The polypeptide is Large ribosomal subunit protein uL30 (Staphylococcus epidermidis (strain ATCC 12228 / FDA PCI 1200)).